We begin with the raw amino-acid sequence, 499 residues long: D-alanine--D-alanyl carrier protein ligase (499 aa).

Residue 152–153 (TS) participates in ATP binding. A D-alanine-binding site is contributed by aspartate 197. ATP is bound by residues 292 to 297 (NTYGPT), aspartate 372, 384 to 387 (YQGR), and lysine 485. Residue lysine 485 coordinates D-alanine.

The protein belongs to the ATP-dependent AMP-binding enzyme family. DltA subfamily.

The protein resides in the cytoplasm. It catalyses the reaction holo-[D-alanyl-carrier protein] + D-alanine + ATP = D-alanyl-[D-alanyl-carrier protein] + AMP + diphosphate. It participates in cell wall biogenesis; lipoteichoic acid biosynthesis. Catalyzes the first step in the D-alanylation of lipoteichoic acid (LTA), the activation of D-alanine and its transfer onto the D-alanyl carrier protein (Dcp) DltC. In an ATP-dependent two-step reaction, forms a high energy D-alanyl-AMP intermediate, followed by transfer of the D-alanyl residue as a thiol ester to the phosphopantheinyl prosthetic group of the Dcp. D-alanylation of LTA plays an important role in modulating the properties of the cell wall in Gram-positive bacteria, influencing the net charge of the cell wall. The polypeptide is D-alanine--D-alanyl carrier protein ligase (Lactococcus lactis subsp. lactis (strain IL1403) (Streptococcus lactis)).